The primary structure comprises 473 residues: Adenosylhomocysteinase (473 aa).

Substrate-binding positions include 58 to 62, D135, and E197; that span reads HMTIQ. Position 198 to 200 (198 to 200) interacts with NAD(+); it reads TTT. Substrate is bound by residues K227 and D231. NAD(+)-binding positions include N232, V265, E284, N319, 340–342, and N385; that span reads IGH. Residue H342 participates in substrate binding. Substrate is bound at residue H392. NAD(+)-binding residues include K467 and Y471.

The protein belongs to the adenosylhomocysteinase family. Homotetramer; dimer of dimers. It depends on NAD(+) as a cofactor.

It localises to the cytoplasm. It catalyses the reaction S-adenosyl-L-homocysteine + H2O = L-homocysteine + adenosine. Its pathway is amino-acid biosynthesis; L-homocysteine biosynthesis; L-homocysteine from S-adenosyl-L-homocysteine: step 1/1. Its function is as follows. May play a key role in the regulation of the intracellular concentration of adenosylhomocysteine, which is a strong inhibitor of SAM-dependent methyltransferases. Catalyzes the hydrolysis of S-adenosyl-L-homocysteine into L-homocysteine and adenosine. The chain is Adenosylhomocysteinase from Bradyrhizobium elkanii.